The chain runs to 97 residues: YcgL domain-containing protein Maqu_1609 (97 aa).

The 85-residue stretch at 5-89 (EFVSVFRSSK…EQDTYIVDFK (85 aa)) folds into the YcgL domain.

The protein is YcgL domain-containing protein Maqu_1609 of Marinobacter nauticus (strain ATCC 700491 / DSM 11845 / VT8) (Marinobacter aquaeolei).